Here is a 1276-residue protein sequence, read N- to C-terminus: MLRWLTLLSCILLTALHGNIVEDVGAAQQASYPPPPPPFPFNVIVILPKRESTYDNFGMTLQKAMPVIDIAVQEVIKAKKLPPGWINLTYWDSRLYEDILLAERHATVGVIQAYCEHRLDAILGFADNYGLATVTKVTAGLNGGIPILTTSGMPSLLNSKKEYPFLTRMQGSYRLLADSMYQLIAYHDEDSVSKSNSSLNYLNLIFFYHDKRRAVNRVIAQDESQETGATSSHCYFSLYAIKRYFTEKSKTFKREWALNTPQFPFDEDLVIERETFKQWLREISLQSNVIILCASPDTVREIMLAAHDLGMATSGEYVFINIDVSTGSHAEQPWIRANDTNNEENEKAKEAYRALKTISLRRSDLDEYKNFELRVKERADQKYNYTNITGKDYEMNNFISAFYDAVLLYAIALNETIQSGLDPRNGHNITSRMWGRTFVGITGNVSIDHNGDRYSDYSLLDLDPVQNRFVEVAYYSGASNQLKTVGQLHWVGGKPPTDLPICGYDKSKCPGYPLHVYLLMGSFLLILVLVGLFIFFWRRYKLEQELAAMSWKIRWEELDGEESQKKNEKKKAKKRKNHNDYLPESDPLLRSTSRSSVNSDKFDEDSLIPIRFRLRSSSSGTTRKISAMIDRKLSIFTRKKSTPPSESQKNGGLTPNSLQKAENGDCSPINEVQFRLPLNDRRVSSPSSEATRKKNSNEEDPENGAKKSLSLKNRKLSFGMVSFKSGSGGSVETIAQNNTQIYTKTAIFKGVVVAIKKLNIDPKKYPRLDLSRAQLMELKKMKDLQHDHITRFTGACIDFPHYCVVTEYCPKGSLEDILENEKIELDKLMKYSLLHDLVKGLFFLHNSEIRSHGRLKSSNCVVDSRFVLKVTDFGLHRLHCLEEINLEEIGEHAYYKKMLWTAPELLRDSNAPPMGTQKGDIYSFAIILHEMMFRKGVFALENEDLSPNEIVQRVRKPVSEDQEPLRPWVSETGEGEGDDALNDTLLSLMVACWSEDPHERPEVSSVRKAVRSLNRDNETSNLVDNLLKRMEQYANNLEGLVEERTQEYLAEKKKVEELLHQLLPPAIADTLIAGRAVQAESYDCVTIYFSDIVGFTSLSSQSTPMQVVTLLNDLYLAFDGVVDNFKVYKVETIGDAYMVVSGLPERRDDHANQIAQMSLSLLHKVKNFVIRHRPHEQLKLRIGMHSGSVVAGVVGSKMPRYCLFGDTVNTSSRMESNGLPLKIHVSQQTYDILMQEAGFKLELRGSVEMKGKGMQTTYWLRGYKDVEIPDFGEEFA.

The N-terminal stretch at 1 to 18 is a signal peptide; the sequence is MLRWLTLLSCILLTALHG. Residues 19–515 are Extracellular-facing; it reads NIVEDVGAAQ…KSKCPGYPLH (497 aa). 8 N-linked (GlcNAc...) asparagine glycosylation sites follow: N87, N196, N338, N384, N387, N414, N428, and N444. The helical transmembrane segment at 516–536 threads the bilayer; that stretch reads VYLLMGSFLLILVLVGLFIFF. At 537-1276 the chain is on the cytoplasmic side; the sequence is WRRYKLEQEL…EIPDFGEEFA (740 aa). 2 disordered regions span residues 562–601 and 635–709; these read ESQKKNEKKKAKKRKNHNDYLPESDPLLRSTSRSSVNSDK and IFTR…KKSL. Positions 567 to 577 are enriched in basic residues; the sequence is NEKKKAKKRKN. Polar residues-rich tracts occupy residues 590-599 and 642-660; these read RSTSRSSVNS and TPPSESQKNGGLTPNSLQK. Positions 717–1013 constitute a Protein kinase domain; that stretch reads SFGMVSFKSG…SSVRKAVRSL (297 aa). ATP-binding positions include 723–731 and K756; that span reads FKSGSGGSV. A coiled-coil region spans residues 1017-1063; sequence NETSNLVDNLLKRMEQYANNLEGLVEERTQEYLAEKKKVEELLHQLL. One can recognise a Guanylate cyclase domain in the interval 1086 to 1215; sequence TIYFSDIVGF…DTVNTSSRME (130 aa). Mg(2+) contacts are provided by D1091, I1092, and D1135.

The protein belongs to the adenylyl cyclase class-4/guanylyl cyclase family. Expressed in head neurons, ventral cord and tail neurons, body wall muscle, hypodermis, somatic gonad and intestine. Isoform d is expressed specifically in AIA interneurons.

It localises to the cell membrane. The protein resides in the cell projection. The protein localises to the dendrite. Its subcellular location is the axon. It is found in the perikaryon. The catalysed reaction is GTP = 3',5'-cyclic GMP + diphosphate. In terms of biological role, guanylate cyclase involved in the production of the second messenger cGMP. Regulates olfactory perception in AWC sensory neurons although may not be involved in the primary sensory transduction steps. Isoforms c: Regulates sensory integration of conflicting sensory cues in AIA interneurons. Its function is as follows. Regulates sensory integration of conflicting sensory cues in AIA interneurons. This is Receptor-type guanylate cyclase gcy-28 from Caenorhabditis elegans.